We begin with the raw amino-acid sequence, 329 residues long: MNELLHQHKAIPEDERNFALRPSLIEEFVGQSEIIENLKVFIKSAYERRATLDHVLLYGPPGLGKTTLAHIIAKELKVSLRSTSGPLLSKAGDLAAILTNLQPMDVLFIDEIHRLHRNIEEILYSAMEDCCLDIVVGEGCGARTLRIDLPAFTLVGATTRFGLISNPLRDRFGIPLHLEFYSVEELMLVIKRAAHVICTDIDDSGAYEIASRSRGTPRIALRLFRRVRDFMVVERQSIIDNHFADSALFNLGVDKSGLDKMDIKYLSFIYEAKNAVGIETIAAALSEDVGNIEETIEPYLLKIGFIQRTPRGRILTTKAIEHLMNYKYI.

The segment at 1–181 is large ATPase domain (RuvB-L); sequence MNELLHQHKA…FGIPLHLEFY (181 aa). Residues L20, R21, G62, K65, T66, T67, R171, Y181, and R218 each contribute to the ATP site. Residue T66 participates in Mg(2+) binding. A small ATPAse domain (RuvB-S) region spans residues 182–252; that stretch reads SVEELMLVIK…FADSALFNLG (71 aa). Positions 255-329 are head domain (RuvB-H); that stretch reads KSGLDKMDIK…IEHLMNYKYI (75 aa). Residues R308 and R313 each contribute to the DNA site.

Belongs to the RuvB family. As to quaternary structure, homohexamer. Forms an RuvA(8)-RuvB(12)-Holliday junction (HJ) complex. HJ DNA is sandwiched between 2 RuvA tetramers; dsDNA enters through RuvA and exits via RuvB. An RuvB hexamer assembles on each DNA strand where it exits the tetramer. Each RuvB hexamer is contacted by two RuvA subunits (via domain III) on 2 adjacent RuvB subunits; this complex drives branch migration. In the full resolvosome a probable DNA-RuvA(4)-RuvB(12)-RuvC(2) complex forms which resolves the HJ.

Its subcellular location is the cytoplasm. It carries out the reaction ATP + H2O = ADP + phosphate + H(+). Its function is as follows. The RuvA-RuvB-RuvC complex processes Holliday junction (HJ) DNA during genetic recombination and DNA repair, while the RuvA-RuvB complex plays an important role in the rescue of blocked DNA replication forks via replication fork reversal (RFR). RuvA specifically binds to HJ cruciform DNA, conferring on it an open structure. The RuvB hexamer acts as an ATP-dependent pump, pulling dsDNA into and through the RuvAB complex. RuvB forms 2 homohexamers on either side of HJ DNA bound by 1 or 2 RuvA tetramers; 4 subunits per hexamer contact DNA at a time. Coordinated motions by a converter formed by DNA-disengaged RuvB subunits stimulates ATP hydrolysis and nucleotide exchange. Immobilization of the converter enables RuvB to convert the ATP-contained energy into a lever motion, pulling 2 nucleotides of DNA out of the RuvA tetramer per ATP hydrolyzed, thus driving DNA branch migration. The RuvB motors rotate together with the DNA substrate, which together with the progressing nucleotide cycle form the mechanistic basis for DNA recombination by continuous HJ branch migration. Branch migration allows RuvC to scan DNA until it finds its consensus sequence, where it cleaves and resolves cruciform DNA. The chain is Holliday junction branch migration complex subunit RuvB from Anaplasma phagocytophilum (strain HZ).